We begin with the raw amino-acid sequence, 168 residues long: MNKTTTKMKVAVVAIVVYLAVGNVDSSPDVMKNLCLNFGKALDECKAEMNLSDSIKDDFANFWVEGYEVSNRDTGCAILCLSKKLDMIDPDGKLHHGNAMEFAKKHGADEAMAKQLLDIIHNCENSTPPNDDACLKTLDIAKCFKKEIHKLNWAPNMDLVVGEVLAEV.

A signal peptide spans 1 to 26 (MNKTTTKMKVAVVAIVVYLAVGNVDS). 3 disulfides stabilise this stretch: C45–C80, C76–C134, and C123–C143.

This sequence belongs to the PBP/GOBP family. Homodimer. As to expression, antenna.

Functionally, this major soluble protein in olfactory sensilla of male moths might serve to solubilize the extremely hydrophobic pheromone molecules and to transport pheromone through the aqueous lymph to receptors located on olfactory cilia. PBP is also found in sensilla from female M.sexta antennae. This chain is Pheromone-binding protein, found in Manduca sexta (Tobacco hawkmoth).